Reading from the N-terminus, the 354-residue chain is AT-hook motif nuclear-localized protein 11 (354 aa).

Disordered stretches follow at residues Met1 to Ser158 and Lys290 to Gly354. Composition is skewed to low complexity over residues Asn46–Pro55 and Val75–Gly96. Residues Lys101–Lys109 carry the Bipartite nuclear localization signal motif. The segment at residues Lys101–Asp113 is a DNA-binding region (a.T hook 1). A compositionally biased stretch (low complexity) spans Ser122 to Asn133. A DNA-binding region (a.T hook 2) is located at residues Lys134–Lys146. The region spanning Ser159–Asp302 is the PPC domain. Positions Thr294 to Ala303 are enriched in acidic residues. The span at Leu304–Gln327 shows a compositional bias: polar residues. The segment covering Met340–Gly354 has biased composition (basic and acidic residues).

The protein resides in the nucleus. In terms of biological role, transcription factor that specifically binds AT-rich DNA sequences related to the nuclear matrix attachment regions (MARs). This is AT-hook motif nuclear-localized protein 11 from Arabidopsis thaliana (Mouse-ear cress).